A 668-amino-acid polypeptide reads, in one-letter code: Threonine--tRNA ligase (668 aa).

A TGS domain is found at 1 to 61 (MSDLKIALTH…ADGDQVEPVA (61 aa)). The interval 265–564 (DHRKLGRDLD…LVEHYAGAFP (300 aa)) is catalytic. C358, H409, and H541 together coordinate Zn(2+).

Belongs to the class-II aminoacyl-tRNA synthetase family. In terms of assembly, homodimer. The cofactor is Zn(2+).

It is found in the cytoplasm. The enzyme catalyses tRNA(Thr) + L-threonine + ATP = L-threonyl-tRNA(Thr) + AMP + diphosphate + H(+). In terms of biological role, catalyzes the attachment of threonine to tRNA(Thr) in a two-step reaction: L-threonine is first activated by ATP to form Thr-AMP and then transferred to the acceptor end of tRNA(Thr). Also edits incorrectly charged L-seryl-tRNA(Thr). This is Threonine--tRNA ligase from Nocardioides sp. (strain ATCC BAA-499 / JS614).